The chain runs to 341 residues: Methionine import ATP-binding protein MetN 3 (341 aa).

The ABC transporter domain occupies 2 to 241 (ILLENVKKIY…PQQDITKRFV (240 aa)). 38–45 (GYSGAGKS) provides a ligand contact to ATP.

The protein belongs to the ABC transporter superfamily. Methionine importer (TC 3.A.1.24) family. As to quaternary structure, the complex is composed of two ATP-binding proteins (MetN), two transmembrane proteins (MetI) and a solute-binding protein (MetQ).

The protein resides in the cell membrane. It carries out the reaction L-methionine(out) + ATP + H2O = L-methionine(in) + ADP + phosphate + H(+). The enzyme catalyses D-methionine(out) + ATP + H2O = D-methionine(in) + ADP + phosphate + H(+). Part of the ABC transporter complex MetNIQ involved in methionine import. Responsible for energy coupling to the transport system. The protein is Methionine import ATP-binding protein MetN 3 of Bacillus cereus (strain ATCC 10987 / NRS 248).